Consider the following 509-residue polypeptide: Putative Rieske 2Fe-2S iron-sulfur protein YhfW (509 aa).

The region spanning 423 to 509 (KPDVQFEDIS…IKPLKQIDLD (87 aa)) is the Rieske domain. Residues Cys-463, His-465, Cys-481, and His-484 each contribute to the [2Fe-2S] cluster site. Cys-468 and Cys-483 are joined by a disulfide.

This sequence belongs to the Rieske iron-sulfur protein family. [2Fe-2S] cluster serves as cofactor.

The protein is Putative Rieske 2Fe-2S iron-sulfur protein YhfW (yhfW) of Bacillus subtilis (strain 168).